Reading from the N-terminus, the 60-residue chain is DNA gyrase inhibitor YacG (60 aa).

Cys3, Cys6, Cys18, and Cys22 together coordinate Zn(2+). A disordered region spans residues 38-60 (PASSEDEEEPLDQEAETPVAPRH). The segment covering 41 to 52 (SEDEEEPLDQEA) has biased composition (acidic residues).

The protein belongs to the DNA gyrase inhibitor YacG family. In terms of assembly, interacts with GyrB. Requires Zn(2+) as cofactor.

Functionally, inhibits all the catalytic activities of DNA gyrase by preventing its interaction with DNA. Acts by binding directly to the C-terminal domain of GyrB, which probably disrupts DNA binding by the gyrase. The protein is DNA gyrase inhibitor YacG of Ruegeria pomeroyi (strain ATCC 700808 / DSM 15171 / DSS-3) (Silicibacter pomeroyi).